A 63-amino-acid polypeptide reads, in one-letter code: Large ribosomal subunit protein uL29 (63 aa).

The protein belongs to the universal ribosomal protein uL29 family.

The polypeptide is Large ribosomal subunit protein uL29 (Bordetella avium (strain 197N)).